A 304-amino-acid chain; its full sequence is UDP-3-O-acyl-N-acetylglucosamine deacetylase (304 aa).

3 residues coordinate Zn(2+): His-78, His-237, and Asp-241. Residue His-264 is the Proton donor of the active site.

Belongs to the LpxC family. It depends on Zn(2+) as a cofactor.

The catalysed reaction is a UDP-3-O-[(3R)-3-hydroxyacyl]-N-acetyl-alpha-D-glucosamine + H2O = a UDP-3-O-[(3R)-3-hydroxyacyl]-alpha-D-glucosamine + acetate. Its pathway is glycolipid biosynthesis; lipid IV(A) biosynthesis; lipid IV(A) from (3R)-3-hydroxytetradecanoyl-[acyl-carrier-protein] and UDP-N-acetyl-alpha-D-glucosamine: step 2/6. In terms of biological role, catalyzes the hydrolysis of UDP-3-O-myristoyl-N-acetylglucosamine to form UDP-3-O-myristoylglucosamine and acetate, the committed step in lipid A biosynthesis. The sequence is that of UDP-3-O-acyl-N-acetylglucosamine deacetylase from Nitrosococcus oceani (strain ATCC 19707 / BCRC 17464 / JCM 30415 / NCIMB 11848 / C-107).